A 2008-amino-acid polypeptide reads, in one-letter code: Histone-lysine N-methyltransferase SETD1B (2008 aa).

The segment covering M1–K20 has biased composition (basic and acidic residues). The interval M1–K42 is disordered. Polar residues predominate over residues Q22–S39. The RRM domain maps to D111–K199. 9 disordered regions span residues N249 to K390, F402 to T652, P682 to P725, R950 to E1172, T1309 to E1328, V1345 to T1461, V1563 to G1600, K1674 to R1712, and E1814 to E1842. Residues S251–P264 show a composition bias toward low complexity. Polar residues-rich tracts occupy residues F265–P293, P301–P315, H360–L381, S405–S414, and D456–S491. Residues L492–M521 are compositionally biased toward basic and acidic residues. Low complexity predominate over residues S524–P537. Composition is skewed to polar residues over residues G540–G560 and A582–R604. 2 stretches are compositionally biased toward basic and acidic residues: residues S606–V617 and E626–G636. A compositionally biased stretch (acidic residues) spans E637 to M646. The segment covering E979–E997 has biased composition (basic and acidic residues). Acidic residues predominate over residues L1011–E1020. Over residues T1021 to E1031 the composition is skewed to basic and acidic residues. Composition is skewed to acidic residues over residues E1050–A1094 and E1105–D1149. The segment covering R1150–E1172 has biased composition (basic and acidic residues). The segment covering V1345 to P1356 has biased composition (low complexity). The segment covering S1378–L1392 has biased composition (basic and acidic residues). Low complexity predominate over residues L1418–S1427. Basic residues-rich tracts occupy residues L1577–R1587 and K1681–K1690. Over residues I1699–Q1710 the composition is skewed to pro residues. The short motif at R1840 to R1845 is the RxxxRR motif element. Positions K1869–K1986 constitute an SET domain. Y1985 lines the S-adenosyl-L-methionine pocket. One can recognise a Post-SET domain in the interval V1992–N2008.

Belongs to the class V-like SAM-binding methyltransferase superfamily. Component of the SET1B/COMPASS complex.

It localises to the nucleus speckle. Its subcellular location is the chromosome. The catalysed reaction is L-lysyl(4)-[histone H3] + 3 S-adenosyl-L-methionine = N(6),N(6),N(6)-trimethyl-L-lysyl(4)-[histone H3] + 3 S-adenosyl-L-homocysteine + 3 H(+). Histone methyltransferase that specifically methylates 'Lys-4' of histone H3, when part of the SET1 histone methyltransferase (HMT) complex, but not if the neighboring 'Lys-9' residue is already methylated. H3 'Lys-4' methylation represents a specific tag for epigenetic transcriptional activation. In Gallus gallus (Chicken), this protein is Histone-lysine N-methyltransferase SETD1B (SETD1B).